The following is a 67-amino-acid chain: Probable Sec-independent protein translocase protein TatE (67 aa).

Residues 1-21 form a helical membrane-spanning segment; that stretch reads MGEISITKLLVVAALVVLLFG. Residues 45-67 form a disordered region; that stretch reads DEDAGAKKDANGDLPAEKLTHKE.

Belongs to the TatA/E family. TatE subfamily.

It localises to the cell inner membrane. Part of the twin-arginine translocation (Tat) system that transports large folded proteins containing a characteristic twin-arginine motif in their signal peptide across membranes. TatE shares overlapping functions with TatA. In Escherichia fergusonii (strain ATCC 35469 / DSM 13698 / CCUG 18766 / IAM 14443 / JCM 21226 / LMG 7866 / NBRC 102419 / NCTC 12128 / CDC 0568-73), this protein is Probable Sec-independent protein translocase protein TatE.